Here is a 265-residue protein sequence, read N- to C-terminus: Shikimate dehydrogenase (NADP(+)) (265 aa).

Residues serine 15–serine 17 and threonine 62 each bind shikimate. Residue lysine 66 is the Proton acceptor of the active site. Residue glutamate 78 participates in NADP(+) binding. Positions 87 and 102 each coordinate shikimate. NADP(+)-binding positions include glycine 126–valine 130, asparagine 150–lysine 155, and valine 210. Tyrosine 212 lines the shikimate pocket. Glycine 233 contributes to the NADP(+) binding site.

Belongs to the shikimate dehydrogenase family. Homodimer.

The catalysed reaction is shikimate + NADP(+) = 3-dehydroshikimate + NADPH + H(+). It functions in the pathway metabolic intermediate biosynthesis; chorismate biosynthesis; chorismate from D-erythrose 4-phosphate and phosphoenolpyruvate: step 4/7. In terms of biological role, involved in the biosynthesis of the chorismate, which leads to the biosynthesis of aromatic amino acids. Catalyzes the reversible NADPH linked reduction of 3-dehydroshikimate (DHSA) to yield shikimate (SA). This chain is Shikimate dehydrogenase (NADP(+)), found in Pelagibacter ubique (strain HTCC1062).